The primary structure comprises 352 residues: Quinolinate synthase (352 aa).

Iminosuccinate-binding residues include histidine 48 and serine 69. Cysteine 114 contributes to the [4Fe-4S] cluster binding site. Residues 140 to 142 (YAN) and serine 157 contribute to the iminosuccinate site. Cysteine 201 lines the [4Fe-4S] cluster pocket. Iminosuccinate-binding positions include 227–229 (HPE) and threonine 244. Residue cysteine 298 participates in [4Fe-4S] cluster binding.

Belongs to the quinolinate synthase family. Type 1 subfamily. Requires [4Fe-4S] cluster as cofactor.

It is found in the cytoplasm. It catalyses the reaction iminosuccinate + dihydroxyacetone phosphate = quinolinate + phosphate + 2 H2O + H(+). It functions in the pathway cofactor biosynthesis; NAD(+) biosynthesis; quinolinate from iminoaspartate: step 1/1. In terms of biological role, catalyzes the condensation of iminoaspartate with dihydroxyacetone phosphate to form quinolinate. The sequence is that of Quinolinate synthase from Pseudomonas syringae pv. syringae (strain B728a).